A 133-amino-acid polypeptide reads, in one-letter code: Ribosome-binding factor A (133 aa).

It belongs to the RbfA family. In terms of assembly, monomer. Binds 30S ribosomal subunits, but not 50S ribosomal subunits or 70S ribosomes.

It is found in the cytoplasm. In terms of biological role, one of several proteins that assist in the late maturation steps of the functional core of the 30S ribosomal subunit. Associates with free 30S ribosomal subunits (but not with 30S subunits that are part of 70S ribosomes or polysomes). Required for efficient processing of 16S rRNA. May interact with the 5'-terminal helix region of 16S rRNA. The polypeptide is Ribosome-binding factor A (Acinetobacter baumannii (strain ACICU)).